We begin with the raw amino-acid sequence, 366 residues long: tRNA/tmRNA (uracil-C(5))-methyltransferase (366 aa).

Residues Gln190, Tyr218, Asn223, Glu239, and Asp299 each contribute to the S-adenosyl-L-methionine site. Cys324 acts as the Nucleophile in catalysis. Catalysis depends on Glu358, which acts as the Proton acceptor.

It belongs to the class I-like SAM-binding methyltransferase superfamily. RNA M5U methyltransferase family. TrmA subfamily.

The enzyme catalyses uridine(54) in tRNA + S-adenosyl-L-methionine = 5-methyluridine(54) in tRNA + S-adenosyl-L-homocysteine + H(+). The catalysed reaction is uridine(341) in tmRNA + S-adenosyl-L-methionine = 5-methyluridine(341) in tmRNA + S-adenosyl-L-homocysteine + H(+). Its function is as follows. Dual-specificity methyltransferase that catalyzes the formation of 5-methyluridine at position 54 (m5U54) in all tRNAs, and that of position 341 (m5U341) in tmRNA (transfer-mRNA). The polypeptide is tRNA/tmRNA (uracil-C(5))-methyltransferase (Shigella dysenteriae serotype 1 (strain Sd197)).